An 82-amino-acid chain; its full sequence is Large ribosomal subunit protein bL31 (82 aa).

Zn(2+) contacts are provided by Cys-16, Cys-18, Cys-37, and Cys-40.

This sequence belongs to the bacterial ribosomal protein bL31 family. Type A subfamily. Part of the 50S ribosomal subunit. The cofactor is Zn(2+).

Functionally, binds the 23S rRNA. The protein is Large ribosomal subunit protein bL31 of Blochmanniella pennsylvanica (strain BPEN).